The primary structure comprises 772 residues: A type blood N-acetyl-alpha-D-galactosamine deacetylase (772 aa).

The N-terminal stretch at 1–27 (MRNRRKAVSLLTGLLVTAQLFPTAALA) is a signal peptide. Positions 87 and 123 each coordinate substrate. An a divalent metal cation-binding site is contributed by Asp-126. The segment at 180–402 (WSKPTSDAER…WRIGYAENSF (223 aa)) is deacetylase activity. A substrate-binding site is contributed by Tyr-236. His-278 is a binding site for a divalent metal cation. In terms of domain architecture, F5/8 type C spans 494–605 (SDDLEIAVVE…KDLVASGSDW (112 aa)). The CBM32 carbohydrate-binding domain stretch occupies residues 502–765 (VENPYTLIPQ…VCVSPVVDFD (264 aa)). The tract at residues 515 to 772 (TATATSVYGG…DFDYFSYVGE (258 aa)) is not required for activity on soluble substrates.

A divalent metal cation serves as cofactor.

The enzyme catalyses an N-acetyl-alpha-D-galactosaminyl-(1-&gt;3)-[alpha-L-fucosyl-(1-&gt;2)]-beta-D-galactosyl derivative + H2O = an alpha-D-galactosaminyl-(1-&gt;3)-[alpha-L-fucosyl-(1-&gt;2)]-beta-D-galactosyl derivative + acetate. With respect to regulation, inhibited by EDTA. One of an enzyme pair that work together to convert the A antigen to the H antigen of the O blood type, which together release galactosamine. Catalyzes the first step in the conversion, generating the substrate for the subsequent enzyme (FpGalNase, AC P0DTR5). Works on many different A antigen subtypes. Glu-90 probably activates a nucleophilic water molecule to start the deacetylation reaction. This chain is A type blood N-acetyl-alpha-D-galactosamine deacetylase, found in Flavonifractor plautii (Fusobacterium plautii).